Here is a 230-residue protein sequence, read N- to C-terminus: V-type proton ATPase subunit E1 (230 aa).

Met1 carries the N-acetylmethionine modification. Residues 8 to 67 (RQIQQMVRFIRQEAEEKANEISVSAEEEFNIEKLQLVEAEKKKIRQDYEKKEKQADVRKK) are a coiled coil. Ser178 carries the post-translational modification Phosphoserine.

The protein belongs to the V-ATPase E subunit family. As to quaternary structure, V-ATPase is a heteromultimeric enzyme composed of a peripheral catalytic V1 complex (components A to H) attached to an integral membrane V0 proton pore complex (components: a, c, c'', d and e).

It localises to the vacuole membrane. In terms of biological role, subunit of the peripheral V1 complex of vacuolar ATPase essential for assembly or catalytic function. V-ATPase is responsible for acidifying a variety of intracellular compartments in eukaryotic cells. Required for Golgi organization and vacuole function in embryogenesis. This is V-type proton ATPase subunit E1 (VHA-E1) from Arabidopsis thaliana (Mouse-ear cress).